We begin with the raw amino-acid sequence, 186 residues long: Akirin-1 (186 aa).

The interval 1–64 is disordered; sequence MACGATLKRS…PLPQLGGDRR (64 aa). Residues 22–27 carry the Nuclear localization signal motif; sequence PKRRRC. Residues 49-60 show a composition bias toward low complexity; it reads QQGQQQPLPQLG. The short motif at 183 to 186 is the SYVS motif element; the sequence is SYVS.

This sequence belongs to the akirin family.

It is found in the nucleus. In terms of biological role, molecular adapter that acts as a bridge between proteins, and which is involved skeletal muscle development. Functions as a signal transducer for MSTN during skeletal muscle regeneration and myogenesis. In Xenopus tropicalis (Western clawed frog), this protein is Akirin-1.